The chain runs to 273 residues: Cell division cycle-associated protein 3 (273 aa).

Disordered regions lie at residues 1–231 (MGST…ALSE) and 251–273 (GGGAWEQNEDHDKENQHFALMES). 2 positions are modified to phosphoserine: S29 and S31. Positions 32-45 (AGIQRTPIQVESSP) are enriched in polar residues. Residue T37 is modified to Phosphothreonine. A phosphoserine mark is found at S44 and S67. T75 is modified (phosphothreonine). The tract at residues 90–124 (KELSEVFETEVSETEVSESISSPVLGLPQETPLSS) is F-box-like. The residue at position 93 (S93) is a Phosphoserine. Over residues 94–105 (EVFETEVSETEV) the composition is skewed to acidic residues. 2 stretches are compositionally biased toward polar residues: residues 144–154 (PWSQTELNSKQ) and 164–175 (STETMVSGQTSD). Residue S204 is modified to Phosphoserine. Position 207 is a phosphothreonine (T207). Polar residues predominate over residues 210–220 (QDDNSPGTLTL). S214 carries the post-translational modification Phosphoserine. At T217 the chain carries Phosphothreonine. The KEN box signature appears at 263–265 (KEN).

Interacts with SKP1. Part of a SCF (SKP1-cullin-F-box) protein ligase complex. Ubiquitinated and degraded by the APC/C-Cdh1 complex.

It is found in the cytoplasm. The protein resides in the cytosol. It functions in the pathway protein modification; protein ubiquitination. In terms of biological role, F-box-like protein which is required for entry into mitosis. Acts by participating in E3 ligase complexes that mediate the ubiquitination and degradation of WEE1 kinase at G2/M phase. This chain is Cell division cycle-associated protein 3 (Cdca3), found in Rattus norvegicus (Rat).